The chain runs to 198 residues: Peptidyl-tRNA hydrolase (198 aa).

Y14 is a binding site for tRNA. Catalysis depends on H19, which acts as the Proton acceptor. TRNA-binding residues include Y64, N66, and N112.

It belongs to the PTH family. Monomer.

The protein localises to the cytoplasm. It catalyses the reaction an N-acyl-L-alpha-aminoacyl-tRNA + H2O = an N-acyl-L-amino acid + a tRNA + H(+). Hydrolyzes ribosome-free peptidyl-tRNAs (with 1 or more amino acids incorporated), which drop off the ribosome during protein synthesis, or as a result of ribosome stalling. Its function is as follows. Catalyzes the release of premature peptidyl moieties from peptidyl-tRNA molecules trapped in stalled 50S ribosomal subunits, and thus maintains levels of free tRNAs and 50S ribosomes. This Beijerinckia indica subsp. indica (strain ATCC 9039 / DSM 1715 / NCIMB 8712) protein is Peptidyl-tRNA hydrolase.